The chain runs to 125 residues: Small ribosomal subunit protein uS13 (125 aa).

It belongs to the universal ribosomal protein uS13 family. As to quaternary structure, part of the 30S ribosomal subunit. Forms a loose heterodimer with protein S19. Forms two bridges to the 50S subunit in the 70S ribosome.

Functionally, located at the top of the head of the 30S subunit, it contacts several helices of the 16S rRNA. In the 70S ribosome it contacts the 23S rRNA (bridge B1a) and protein L5 of the 50S subunit (bridge B1b), connecting the 2 subunits; these bridges are implicated in subunit movement. Contacts the tRNAs in the A and P-sites. This chain is Small ribosomal subunit protein uS13, found in Rickettsia rickettsii (strain Iowa).